Reading from the N-terminus, the 398-residue chain is Phosphoglycerate kinase (398 aa).

Substrate-binding positions include 23–25 (DFN), R38, 61–64 (HMGK), R122, and R155. ATP contacts are provided by residues K206, G297, E328, and 354–357 (GGDS).

This sequence belongs to the phosphoglycerate kinase family. Monomer.

It is found in the cytoplasm. The catalysed reaction is (2R)-3-phosphoglycerate + ATP = (2R)-3-phospho-glyceroyl phosphate + ADP. Its pathway is carbohydrate degradation; glycolysis; pyruvate from D-glyceraldehyde 3-phosphate: step 2/5. This chain is Phosphoglycerate kinase, found in Clostridium botulinum (strain Okra / Type B1).